Here is a 320-residue protein sequence, read N- to C-terminus: ATPase H(+)-transporting accessory protein 2 (320 aa).

A signal peptide spans 1 to 17 (MLRVFVIFSLFIAAINA). Residues 18-277 (SGEFTVLNRP…YGSDYPVIFN (260 aa)) are Lumenal-facing. A helical membrane pass occupies residues 278–298 (IILWFMVVFGLSLLAICYAIA). The Cytoplasmic segment spans residues 299 to 320 (AMDPGRDSIIYRMTSTRIKKDN). Positions 317-320 (KKDN) match the Mediates retrograde transport to the ER motif.

In terms of assembly, interacts with fz and fz2. Interacts (via N-terminus) with stan. As an accessory component of the multisubunit proton-transporting vacuolar (V)-ATPase protein pump, might interacts with VhaAC45. In terms of processing, proteolytically cleaved by a furin-like convertase in the trans-Golgi network to generate N- and C-terminal fragments. Cleavage is reduced in the fat body.

Its subcellular location is the cell membrane. The protein localises to the endoplasmic reticulum membrane. It localises to the vesicle. It is found in the apical cell membrane. The protein resides in the golgi apparatus membrane. Its subcellular location is the secreted. Multifunctional protein which functions as a transmembrane receptor in the planar cell polarity (PCP) and is involved in the assembly of the proton-transporting vacuolar (V)-ATPase protein pump. As transmembrane receptor mediates fz/PCP signaling through interaction with fz and stabilizes asymmetric PCP domains through its interaction with stan. Also mediates Wnt/beta-cat signaling through interaction with fz/fz2. Probably by controlling the assembly of the V-ATPase pump and thus the acidification of the endo-lysosomal system, plays a role in many neuronal processes including synapse morphology and synaptic transmission. In terms of biological role, stabilizes asymmetric Planar Cell Polarity (PCP) domains through its interaction with stan. The polypeptide is ATPase H(+)-transporting accessory protein 2 (Drosophila melanogaster (Fruit fly)).